Reading from the N-terminus, the 175-residue chain is Peptide methionine sulfoxide reductase MsrA (175 aa).

Cys10 is a catalytic residue.

The protein belongs to the MsrA Met sulfoxide reductase family.

It catalyses the reaction L-methionyl-[protein] + [thioredoxin]-disulfide + H2O = L-methionyl-(S)-S-oxide-[protein] + [thioredoxin]-dithiol. It carries out the reaction [thioredoxin]-disulfide + L-methionine + H2O = L-methionine (S)-S-oxide + [thioredoxin]-dithiol. Has an important function as a repair enzyme for proteins that have been inactivated by oxidation. Catalyzes the reversible oxidation-reduction of methionine sulfoxide in proteins to methionine. The protein is Peptide methionine sulfoxide reductase MsrA of Psychrobacter sp. (strain PRwf-1).